The sequence spans 115 residues: Succinate dehydrogenase assembly factor 3, mitochondrial (115 aa).

The protein belongs to the complex I LYR family. SDHAF3 subfamily. Interacts with the iron-sulfur protein subunit within the SDH catalytic dimer.

It is found in the mitochondrion matrix. Its function is as follows. Plays an essential role in the assembly of succinate dehydrogenase (SDH), an enzyme complex (also referred to as respiratory complex II) that is a component of both the tricarboxylic acid (TCA) cycle and the mitochondrial electron transport chain, and which couples the oxidation of succinate to fumarate with the reduction of ubiquinone (coenzyme Q) to ubiquinol. Promotes maturation of the iron-sulfur protein subunit of the SDH catalytic dimer, protecting it from the deleterious effects of oxidants. May act together with SDHAF1. The sequence is that of Succinate dehydrogenase assembly factor 3, mitochondrial (acn9) from Nematostella vectensis (Starlet sea anemone).